Here is a 644-residue protein sequence, read N- to C-terminus: Protein cueball (644 aa).

Residues 1 to 26 (MIRIRFGMDVLLVLLLATCLLSPTHG) form the signal peptide. Topologically, residues 27 to 531 (TPLEWDFAVT…VCLTPTVWTS (505 aa)) are extracellular. Residues Asn-82 and Asn-108 are each glycosylated (N-linked (GlcNAc...) asparagine). LDL-receptor class B repeat units follow at residues 121–166 (TNLF…DVCR), 167–211 (RKLY…DQLS), and 212–257 (DRLF…TNDA). 2 N-linked (GlcNAc...) asparagine glycosylation sites follow: Asn-175 and Asn-190. Asn-313 carries N-linked (GlcNAc...) asparagine glycosylation. EGF-like domains are found at residues 398-430 (EIRE…FTGE) and 433-471 (EVSV…ARCE). 5 disulfide bridges follow: Cys-402–Cys-411, Cys-406–Cys-421, Cys-437–Cys-447, Cys-441–Cys-459, and Cys-461–Cys-470. 2 N-linked (GlcNAc...) asparagine glycosylation sites follow: Asn-473 and Asn-508. Residues 532-552 (SVIIILVVGIVSSLLLVAVIV) form a helical membrane-spanning segment. At 553–644 (HGIRRLYKPK…LIHNMEDDLY (92 aa)) the chain is on the cytoplasmic side.

This sequence belongs to the cueball family.

Its subcellular location is the cell membrane. Functionally, has a role in spermatogenesis and oogenesis. This is Protein cueball from Drosophila yakuba (Fruit fly).